The primary structure comprises 211 residues: Ribonuclease HII (211 aa).

Positions 11–200 (EFIAGVDEVG…VKKLLSTLLS (190 aa)) constitute an RNase H type-2 domain. A divalent metal cation-binding residues include Asp-17, Glu-18, and Asp-109.

It belongs to the RNase HII family. The cofactor is Mn(2+). Requires Mg(2+) as cofactor.

Its subcellular location is the cytoplasm. The enzyme catalyses Endonucleolytic cleavage to 5'-phosphomonoester.. Functionally, endonuclease that specifically degrades the RNA of RNA-DNA hybrids. This Histophilus somni (strain 2336) (Haemophilus somnus) protein is Ribonuclease HII.